Reading from the N-terminus, the 206-residue chain is Tumor protein D54 (206 aa).

N-acetylmethionine is present on Met1. Residues 1–14 (MDSAGQDINLNSPN) show a composition bias toward polar residues. The disordered stretch occupies residues 1-24 (MDSAGQDINLNSPNKGLLSDSMTD). Ser3, Ser12, Ser19, and Ser21 each carry phosphoserine. The stretch at 38–82 (VEGLTEAEEEELRAELTKVEEEIVTLRQVLAAKERHCGELKRRLG) forms a coiled coil. Ser96, Ser149, and Ser161 each carry phosphoserine. At Thr163 the chain carries Phosphothreonine. A Phosphoserine modification is found at Ser166. Thr173 is subject to Phosphothreonine. Positions 175-185 (KSKVVGDRENG) are enriched in basic and acidic residues. The segment at 175-206 (KSKVVGDRENGSDSLPSSAGSGDKPLSDPAPF) is disordered. 2 positions are modified to phosphoserine: Ser192 and Ser195.

The protein belongs to the TPD52 family. In terms of assembly, forms a homodimer or heterodimer with other members of the family. Interacts with MAL2.

This chain is Tumor protein D54 (TPD52L2), found in Pongo abelii (Sumatran orangutan).